Consider the following 297-residue polypeptide: Large ribosomal subunit protein uL18 (297 aa).

Belongs to the universal ribosomal protein uL18 family. As to quaternary structure, component of the large ribosomal subunit (LSU).

The protein localises to the cytoplasm. Its subcellular location is the nucleus. Functionally, component of the ribosome, a large ribonucleoprotein complex responsible for the synthesis of proteins in the cell. The small ribosomal subunit (SSU) binds messenger RNAs (mRNAs) and translates the encoded message by selecting cognate aminoacyl-transfer RNA (tRNA) molecules. The large subunit (LSU) contains the ribosomal catalytic site termed the peptidyl transferase center (PTC), which catalyzes the formation of peptide bonds, thereby polymerizing the amino acids delivered by tRNAs into a polypeptide chain. The nascent polypeptides leave the ribosome through a tunnel in the LSU and interact with protein factors that function in enzymatic processing, targeting, and the membrane insertion of nascent chains at the exit of the ribosomal tunnel. This chain is Large ribosomal subunit protein uL18 (RpL5), found in Aedes aegypti (Yellowfever mosquito).